A 342-amino-acid chain; its full sequence is Ribosomal RNA small subunit methyltransferase C (342 aa).

Belongs to the methyltransferase superfamily. RsmC family. In terms of assembly, monomer.

The protein localises to the cytoplasm. It catalyses the reaction guanosine(1207) in 16S rRNA + S-adenosyl-L-methionine = N(2)-methylguanosine(1207) in 16S rRNA + S-adenosyl-L-homocysteine + H(+). In terms of biological role, specifically methylates the guanine in position 1207 of 16S rRNA in the 30S particle. The protein is Ribosomal RNA small subunit methyltransferase C of Salmonella choleraesuis (strain SC-B67).